We begin with the raw amino-acid sequence, 364 residues long: Chorismate synthase (364 aa).

Arg-48 provides a ligand contact to NADP(+). FMN contacts are provided by residues 131–133 (RSS), 243–244 (NA), Gly-288, 303–307 (KPTSS), and Arg-329.

Belongs to the chorismate synthase family. Homotetramer. FMNH2 serves as cofactor.

It carries out the reaction 5-O-(1-carboxyvinyl)-3-phosphoshikimate = chorismate + phosphate. It participates in metabolic intermediate biosynthesis; chorismate biosynthesis; chorismate from D-erythrose 4-phosphate and phosphoenolpyruvate: step 7/7. Functionally, catalyzes the anti-1,4-elimination of the C-3 phosphate and the C-6 proR hydrogen from 5-enolpyruvylshikimate-3-phosphate (EPSP) to yield chorismate, which is the branch point compound that serves as the starting substrate for the three terminal pathways of aromatic amino acid biosynthesis. This reaction introduces a second double bond into the aromatic ring system. The chain is Chorismate synthase from Brucella melitensis biotype 2 (strain ATCC 23457).